Here is a 367-residue protein sequence, read N- to C-terminus: NADH-quinone oxidoreductase subunit D (367 aa).

The protein belongs to the complex I 49 kDa subunit family. In terms of assembly, NDH-1 is composed of 14 different subunits. Subunits NuoB, C, D, E, F, and G constitute the peripheral sector of the complex.

It localises to the cell inner membrane. It catalyses the reaction a quinone + NADH + 5 H(+)(in) = a quinol + NAD(+) + 4 H(+)(out). Its function is as follows. NDH-1 shuttles electrons from NADH, via FMN and iron-sulfur (Fe-S) centers, to quinones in the respiratory chain. The immediate electron acceptor for the enzyme in this species is believed to be ubiquinone. Couples the redox reaction to proton translocation (for every two electrons transferred, four hydrogen ions are translocated across the cytoplasmic membrane), and thus conserves the redox energy in a proton gradient. This Thermosipho melanesiensis (strain DSM 12029 / CIP 104789 / BI429) protein is NADH-quinone oxidoreductase subunit D.